The sequence spans 561 residues: NO-associated protein 1, chloroplastic/mitochondrial (561 aa).

A chloroplast and mitochondrion-targeting transit peptide spans 1-31; it reads MALRTLSTFPSLPRRHTTTRREPNLTVIYRN. GTP contacts are provided by residues 108–111, 166–174, 223–226, 260–261, and 289–294; these read CYGC, YPGGKQFVS, TKID, SK, and NVGKSA. Residues 175-351 enclose the CP-type G domain; it reads ADELREKLSH…LYDTPGVHLH (177 aa).

This sequence belongs to the TRAFAC class YlqF/YawG GTPase family. NOA1 subfamily. Expressed in aleurone layer and the embryo.

It is found in the mitochondrion. The protein resides in the plastid. The protein localises to the chloroplast. It catalyses the reaction 2 L-arginine + 3 NADPH + 4 O2 + H(+) = 2 L-citrulline + 2 nitric oxide + 3 NADP(+) + 4 H2O. Stimulated by calcium/calmodulin. Inhibited by L-NAME. Not activated by tetrahydrobiopterin (BH4), FAD, FMN, or heme. In terms of biological role, exhibits cGTPase activity; binds and hydrolyzes specifically GTP. May participate in ribosome assembly and stability and thus regulates protein synthesis in chloroplasts. The GTPase activity requires MgCl(2)and the presence of either KCl or (NH(4))(2)SO(4). Involved in the post-transcriptional regulation of the methylerythritol phosphate (MEP) pathway. Involved in chlorophyll-a fluorescence regulation. Functionally, may mediate the production or accumulation of nitric oxide (NO) which is a messenger molecule involved in hormonal signaling and defense responses in plant. Acts as an antisenescence agent. Plays a crucial role in both extracellular calmodulin (ExtCaM)-triggered and salicylic acid (SA)-mediated H(2)O(2)-dependent stomatal closure. The polypeptide is NO-associated protein 1, chloroplastic/mitochondrial (NOA1) (Arabidopsis thaliana (Mouse-ear cress)).